Consider the following 313-residue polypeptide: Biotin synthase (313 aa).

Residues 37-263 (YYGKKVKLNM…INPTKEIRIA (227 aa)) form the Radical SAM core domain. C55, C59, and C62 together coordinate [4Fe-4S] cluster. Residues C98, C131, C191, and R261 each coordinate [2Fe-2S] cluster.

The protein belongs to the radical SAM superfamily. Biotin synthase family. In terms of assembly, homodimer. It depends on [4Fe-4S] cluster as a cofactor. [2Fe-2S] cluster is required as a cofactor.

The catalysed reaction is (4R,5S)-dethiobiotin + (sulfur carrier)-SH + 2 reduced [2Fe-2S]-[ferredoxin] + 2 S-adenosyl-L-methionine = (sulfur carrier)-H + biotin + 2 5'-deoxyadenosine + 2 L-methionine + 2 oxidized [2Fe-2S]-[ferredoxin]. Its pathway is cofactor biosynthesis; biotin biosynthesis; biotin from 7,8-diaminononanoate: step 2/2. Its function is as follows. Catalyzes the conversion of dethiobiotin (DTB) to biotin by the insertion of a sulfur atom into dethiobiotin via a radical-based mechanism. In Staphylococcus epidermidis (strain ATCC 12228 / FDA PCI 1200), this protein is Biotin synthase.